Consider the following 88-residue polypeptide: Protein U62 (88 aa).

This is Protein U62 from Elephantid herpesvirus 1 (isolate Asian elephant/Berlin/Kiba/1998) (EIHV-1).